The chain runs to 117 residues: Large ribosomal subunit protein bL19 (117 aa).

The protein belongs to the bacterial ribosomal protein bL19 family.

Its function is as follows. This protein is located at the 30S-50S ribosomal subunit interface and may play a role in the structure and function of the aminoacyl-tRNA binding site. The chain is Large ribosomal subunit protein bL19 from Paenarthrobacter aurescens (strain TC1).